Here is a 914-residue protein sequence, read N- to C-terminus: MINSLLTRLFGSRNERQLRQLNSIVAKINALEAELQKLSDTALQAKTTEFKQSIQDGKSLDKLLPEAFAVCREASRRVLGMRHYDVQLIGGMVLHLGKIAEMRTGEGKTLVATLPVYLNALAGKGVHVVTVNDYLARRDAAHMGRLYNWLGLSVGVVYPGMPHSDKHAAYGADITYGTNNEFGFDYLRDNMALSKADRYQRGLHYAIVDEVDSILIDEARTPLIISGPADESPDLYIRVNRIIPHLTRQENEEAEGDYWVDEKGKQVHLSEVGMERAEDLLRQAGILEEGDDSLYAAQNLSVVHHLNAALRAHALYQRDVDYIVRDGEVVIVDEFTGRTLAGRRWSDGLHQAIEAKEGVPVQRENQTLASITFQNLFRIYKKLSGMTGTADTEAYEFQSIYGLEVMVIPTNRPTVRKDYPDQVFLNRSSKFNAVLEDIKDCAKRGQPVLVGTTSIEISEMLSEHLRKARVKHEVLNAKQHEREATIVANAGLPGAVTIATNMAGRGTDIVLGGSLDTVLAELDPDATEEDRFRVKTAWNRRHEAVKAAGGLHIIGTERHESRRIDNQLRGRAGRQGDPGSSRFYLSLEDSLMRIFASEWVQKVMRLMGMKEGDVIEDRRVTRQIERAQRKVEAHNFDIRKNLLDYDDVNNEQRKVVYAQRDELLDAESIKENIDSIRHEVIDALVTRFVPEHSIDEQWDLPGLQATLQSEWGLHLPLIEMLKGREEVDAERIAFLVQDAVDKHCAEREASIGAETMRALEKHVMLTVLDQGWKEHLATMDYLRQGIHLRGYAQKQPKQEYKREAFELFSEMLEHVKREVIASLARVRIRSEEEMAALEEQERRQVDTLLRQSQFQHQEAGGYGTGDEAVSLQRQPAGQRAAIAQVIRDTPKVGRNDPCPCGSGKKYKHCHGLVT.

ATP contacts are provided by residues Q87, 105–109 (GEGKT), and D508. Positions 898, 900, 909, and 910 each coordinate Zn(2+).

This sequence belongs to the SecA family. Monomer and homodimer. Part of the essential Sec protein translocation apparatus which comprises SecA, SecYEG and auxiliary proteins SecDF-YajC and YidC. Zn(2+) serves as cofactor.

Its subcellular location is the cell inner membrane. The protein localises to the cytoplasm. It catalyses the reaction ATP + H2O + cellular proteinSide 1 = ADP + phosphate + cellular proteinSide 2.. In terms of biological role, part of the Sec protein translocase complex. Interacts with the SecYEG preprotein conducting channel. Has a central role in coupling the hydrolysis of ATP to the transfer of proteins into and across the cell membrane, serving both as a receptor for the preprotein-SecB complex and as an ATP-driven molecular motor driving the stepwise translocation of polypeptide chains across the membrane. The polypeptide is Protein translocase subunit SecA (Xylella fastidiosa (strain M23)).